Reading from the N-terminus, the 390-residue chain is uncharacterized protein (390 aa).

The protein belongs to the glycosyltransferase group 1 family. Glycosyltransferase 4 subfamily.

This is an uncharacterized protein from Methanocaldococcus jannaschii (strain ATCC 43067 / DSM 2661 / JAL-1 / JCM 10045 / NBRC 100440) (Methanococcus jannaschii).